Here is a 314-residue protein sequence, read N- to C-terminus: ATP synthase gamma chain (314 aa).

It belongs to the ATPase gamma chain family. As to quaternary structure, F-type ATPases have 2 components, CF(1) - the catalytic core - and CF(0) - the membrane proton channel. CF(1) has five subunits: alpha(3), beta(3), gamma(1), delta(1), epsilon(1). CF(0) has three main subunits: a, b and c.

It is found in the cellular thylakoid membrane. Produces ATP from ADP in the presence of a proton gradient across the membrane. The gamma chain is believed to be important in regulating ATPase activity and the flow of protons through the CF(0) complex. The protein is ATP synthase gamma chain of Synechococcus sp. (strain JA-3-3Ab) (Cyanobacteria bacterium Yellowstone A-Prime).